A 572-amino-acid chain; its full sequence is MATVSRRAYAEMFGPTVGDRVRLADTGLVAEVEQDFTLRAGGYGEEVKFGGGKTIRDGMAQSQRTRAEGAMDTVLTNALVIDHWGIVKADIGLKDGRVAAIGKAGNPDTQPGVDIVIGPGTEIISCEGNIVTAGGIDSHIHFICPQQIEEALASGITTMLGGGTGPATGTLATTCTPGPWHIERMLQAADAFPMNIGFLGKGNASLPAALHEQIEAGVIGLKLHEDWGTTPSAISNCMDVADATDTQVAIHSDTLNESGFVENTIAAVGGRGICAFHTEGAGGGHAPDILRVVGEDNFLPSSTNPTMPYTRNTLDEHVDMLMVCHHLDAAIAEDLAFAESRIRKETIAAEDILHDLGAISMMSSDSQAMGRVGEVILRTWQTADKMKQQRGALPEDGARNDNHRIKRYVAKYTINPAIAHGISHDVGSLEVGKWADIVVWKPAFFGVKPAMVLKGGSIAVAAMGDPNASIPTPQPVHYRPMFGAFGGSLARSSLTFVSQAAMAAGVRERFGLAKQLSAVRGIRGVRKQHMVHNGYTPRMEIDAQTYTVRADGQLLTCESATRLPLAQRYFLF.

Positions G134 to F572 constitute a Urease domain. Ni(2+)-binding residues include H139, H141, and K222. Residue K222 is modified to N6-carboxylysine. H224 provides a ligand contact to substrate. Ni(2+)-binding residues include H251 and H277. The active-site Proton donor is H325. Ni(2+) is bound at residue D365.

Belongs to the metallo-dependent hydrolases superfamily. Urease alpha subunit family. As to quaternary structure, heterotrimer of UreA (gamma), UreB (beta) and UreC (alpha) subunits. Three heterotrimers associate to form the active enzyme. The cofactor is Ni cation. Post-translationally, carboxylation allows a single lysine to coordinate two nickel ions.

It is found in the cytoplasm. It catalyses the reaction urea + 2 H2O + H(+) = hydrogencarbonate + 2 NH4(+). The protein operates within nitrogen metabolism; urea degradation; CO(2) and NH(3) from urea (urease route): step 1/1. This Paracidovorax citrulli (strain AAC00-1) (Acidovorax citrulli) protein is Urease subunit alpha.